The following is a 431-amino-acid chain: Histidinol dehydrogenase (431 aa).

3 residues coordinate NAD(+): Tyr-124, Gln-187, and Asn-210. Ser-236, Gln-258, and His-261 together coordinate substrate. Residues Gln-258 and His-261 each coordinate Zn(2+). Active-site proton acceptor residues include Glu-325 and His-326. His-326, Asp-359, Glu-413, and His-418 together coordinate substrate. Asp-359 provides a ligand contact to Zn(2+). His-418 contacts Zn(2+).

The protein belongs to the histidinol dehydrogenase family. Zn(2+) is required as a cofactor.

It carries out the reaction L-histidinol + 2 NAD(+) + H2O = L-histidine + 2 NADH + 3 H(+). It participates in amino-acid biosynthesis; L-histidine biosynthesis; L-histidine from 5-phospho-alpha-D-ribose 1-diphosphate: step 9/9. In terms of biological role, catalyzes the sequential NAD-dependent oxidations of L-histidinol to L-histidinaldehyde and then to L-histidine. This Legionella pneumophila (strain Paris) protein is Histidinol dehydrogenase.